A 396-amino-acid polypeptide reads, in one-letter code: MPLYLKAEKIQSWRVLIMACAGFIFNTTEFVPVAMLSDIAQSFDMQTADTGLMMTVYAWTVLIMSLPAMLATGNMERKSLLIKLFIIFIVGHILSVIAWNFWILLLARMCIALAHSVFWSITASLVMRISPKHKKTQALGMLAIGTALATILGLPIGRIVGQLVGWRVTFGIIAVLALSIMFLIIRLLPNLPSKNAGSIASLPLLAKRPLLLWLYVTTAIVISAHFTAYTYIEPFMIDVGHLDPNFATAVLLVFGFSGIAASLLFNRLYRFAPTKFIVVSMSLLMFSLLLLLFSTETIIAMFSLVFIWGIGISCIGLSLQMRVLKLAPDATDVATAIYSGIFNAGIGAGALFGNLATTYLGLNEIGYTGAALGLIGFIIFITTHLKYRHTFLLQNK.

Transmembrane regions (helical) follow at residues 15-35, 51-71, 84-104, 109-129, 137-157, 168-188, 209-229, 245-265, 276-296, 297-317, 333-353, and 365-385; these read VLIM…PVAM, GLMM…AMLA, LFII…FWIL, MCIA…VMRI, QALG…LPIG, VTFG…IRLL, PLLL…FTAY, NFAT…SLLF, FIVV…FSTE, TIIA…CIGL, VATA…ALFG, and IGYT…TTHL.

This sequence belongs to the major facilitator superfamily. SotB (TC 2.A.1.2) family.

It is found in the cell inner membrane. Functionally, involved in the efflux of sugars. The physiological role may be the reduction of the intracellular concentration of toxic sugars or sugar metabolites. This chain is Probable sugar efflux transporter, found in Haemophilus influenzae (strain PittGG).